Here is a 420-residue protein sequence, read N- to C-terminus: Methanogen homoaconitase large subunit (420 aa).

[4Fe-4S] cluster is bound by residues Cys-302, Cys-362, and Cys-365.

This sequence belongs to the aconitase/IPM isomerase family. LeuC type 2 subfamily. In terms of assembly, heterotetramer of 2 HacA and 2 HacB proteins. [4Fe-4S] cluster serves as cofactor.

It catalyses the reaction (2R)-homocitrate = (2R,3S)-homoisocitrate. The catalysed reaction is (2R)-homocitrate = cis-homoaconitate + H2O. The enzyme catalyses (2R,3S)-homoisocitrate = cis-homoaconitate + H2O. It carries out the reaction cis-(homo)2aconitate + H2O = (2R,3S)-iso(homo)2citrate. It catalyses the reaction cis-(homo)3aconitate + H2O = (2R,3S)-iso(homo)3citrate. The catalysed reaction is (R)-malate = maleate + H2O. The enzyme catalyses cis-aconitate + H2O = D-threo-isocitrate. The protein operates within organic acid metabolism; 2-oxosuberate biosynthesis. In terms of biological role, component of a hydro-lyase with broad substrate specificity for cis-unsaturated tricarboxylic acids. Catalyzes both the reversible dehydration of (R)-homocitrate ((R)-2-hydroxybutane-1,2,4-tricarboxylate) to produce cis-homoaconitate ((Z)-but-1-ene-1,2,4-tricarboxylate), and its hydration to homoisocitrate ((1R,2S)-1-hydroxybutane-1,2,4-tricarboxylate). Is also able to hydrate the analogous longer chain substrates cis-homo(2)-aconitate, cis-homo(3)-aconitate, and even the non-physiological cis-homo(4)-aconitate with similar efficiency. These reactions are part of the biosynthesis pathway of coenzyme B. Can also catalyze the hydration of maleate to (R)-malate, and that of cis-aconitate. Cannot catalyze the hydration of citraconate and the dehydration of (S)-homocitrate, citramalate, 2-isopropylmalate, 3-isopropylmalate, citrate or threo-DL-isocitrate. The protein is Methanogen homoaconitase large subunit (hacA) of Methanocaldococcus jannaschii (strain ATCC 43067 / DSM 2661 / JAL-1 / JCM 10045 / NBRC 100440) (Methanococcus jannaschii).